The primary structure comprises 360 residues: 3-dehydroquinate synthase (360 aa).

NAD(+)-binding positions include 105 to 109 (GVVGD), 129 to 130 (TT), Lys-142, Lys-151, and 169 to 172 (TLKT). The Zn(2+) site is built by Glu-184, His-247, and His-263.

It belongs to the sugar phosphate cyclases superfamily. Dehydroquinate synthase family. Co(2+) serves as cofactor. It depends on Zn(2+) as a cofactor. The cofactor is NAD(+).

It is found in the cytoplasm. The catalysed reaction is 7-phospho-2-dehydro-3-deoxy-D-arabino-heptonate = 3-dehydroquinate + phosphate. It functions in the pathway metabolic intermediate biosynthesis; chorismate biosynthesis; chorismate from D-erythrose 4-phosphate and phosphoenolpyruvate: step 2/7. Its function is as follows. Catalyzes the conversion of 3-deoxy-D-arabino-heptulosonate 7-phosphate (DAHP) to dehydroquinate (DHQ). The protein is 3-dehydroquinate synthase of Acetivibrio thermocellus (strain ATCC 27405 / DSM 1237 / JCM 9322 / NBRC 103400 / NCIMB 10682 / NRRL B-4536 / VPI 7372) (Clostridium thermocellum).